Here is a 541-residue protein sequence, read N- to C-terminus: Chaperonin GroEL (541 aa).

ATP contacts are provided by residues 29-32, 86-90, Gly-413, 478-480, and Asp-494; these read TIGP, DGTTT, and NAA.

It belongs to the chaperonin (HSP60) family. Forms a cylinder of 14 subunits composed of two heptameric rings stacked back-to-back. Interacts with the co-chaperonin GroES.

It is found in the cytoplasm. It catalyses the reaction ATP + H2O + a folded polypeptide = ADP + phosphate + an unfolded polypeptide.. Together with its co-chaperonin GroES, plays an essential role in assisting protein folding. The GroEL-GroES system forms a nano-cage that allows encapsulation of the non-native substrate proteins and provides a physical environment optimized to promote and accelerate protein folding. The chain is Chaperonin GroEL from Oenococcus oeni (strain ATCC BAA-331 / PSU-1).